The primary structure comprises 406 residues: Argininosuccinate synthase (406 aa).

ATP-binding positions include alanine 12–serine 20 and alanine 39. The L-citrulline site is built by tyrosine 90 and serine 95. Glycine 120 lines the ATP pocket. L-aspartate is bound by residues threonine 122, asparagine 126, and aspartate 127. Asparagine 126 provides a ligand contact to L-citrulline. Residues arginine 130, serine 179, serine 188, glutamate 264, and tyrosine 276 each contribute to the L-citrulline site.

Belongs to the argininosuccinate synthase family. Type 1 subfamily. Homotetramer.

The protein localises to the cytoplasm. It catalyses the reaction L-citrulline + L-aspartate + ATP = 2-(N(omega)-L-arginino)succinate + AMP + diphosphate + H(+). It functions in the pathway amino-acid biosynthesis; L-arginine biosynthesis; L-arginine from L-ornithine and carbamoyl phosphate: step 2/3. The protein is Argininosuccinate synthase of Citrifermentans bemidjiense (strain ATCC BAA-1014 / DSM 16622 / JCM 12645 / Bem) (Geobacter bemidjiensis).